The primary structure comprises 464 residues: Glutamate--tRNA ligase (464 aa).

A 'HIGH' region motif is present at residues 9 to 19; the sequence is PSPTGYLHIGG. The 'KMSKS' region signature appears at 242-246; that stretch reads KISKR. Lys245 serves as a coordination point for ATP.

It belongs to the class-I aminoacyl-tRNA synthetase family. Glutamate--tRNA ligase type 1 subfamily. In terms of assembly, monomer.

The protein resides in the cytoplasm. It carries out the reaction tRNA(Glu) + L-glutamate + ATP = L-glutamyl-tRNA(Glu) + AMP + diphosphate. Its function is as follows. Catalyzes the attachment of glutamate to tRNA(Glu) in a two-step reaction: glutamate is first activated by ATP to form Glu-AMP and then transferred to the acceptor end of tRNA(Glu). This is Glutamate--tRNA ligase from Neisseria meningitidis serogroup C (strain 053442).